Consider the following 424-residue polypeptide: MFDRVEIRIKSGDGGSGKVSFRREKFVPYGGPDGGDGGDGGNVYLEADSGLYSLLNFKHKRVHKAANGENGMGSRCTGHNGADLVIKVPVGTVATIVEENGQKRVLADLAADGDRTLVARGGQGGLGNTHFVSSTNQAPMLAQKGQPGGEYELILELKLIADVAIIGYPNVGKSSLLSLLTAAKPRVANYPFTTLSPVMGVVERTEGTFVMAEVPGLIEDAHLGRGLGHDFLRHISRTRMVIHLLDGTSDNPIDDMIKVNSELYLYDASLSERPQVVAVNKIDDELVQLRREELTETFKEAGLEVFFISALTGEGVEVLLDKVAEKLAILKAADAPETETDQEIKVFRPAPKGKMGFHITRLEDGWQVEAPEIERIIEHSDIEDLEVRRQIMVLLKHRNVQQALIKAGAVIGQKIITGRLEWYL.

One can recognise an Obg domain in the interval 1 to 160 (MFDRVEIRIK…YELILELKLI (160 aa)). An OBG-type G domain is found at 161–328 (ADVAIIGYPN…LLDKVAEKLA (168 aa)). Residues 167 to 174 (GYPNVGKS), 192 to 196 (FTTLS), 213 to 216 (EVPG), 280 to 283 (NKID), and 309 to 311 (SAL) each bind GTP. Mg(2+) contacts are provided by S174 and T194. Residues 349-424 (PAPKGKMGFH…IITGRLEWYL (76 aa)) form the OCT domain.

Belongs to the TRAFAC class OBG-HflX-like GTPase superfamily. OBG GTPase family. As to quaternary structure, monomer. It depends on Mg(2+) as a cofactor.

The protein localises to the cytoplasm. In terms of biological role, an essential GTPase which binds GTP, GDP and possibly (p)ppGpp with moderate affinity, with high nucleotide exchange rates and a fairly low GTP hydrolysis rate. Plays a role in control of the cell cycle, stress response, ribosome biogenesis and in those bacteria that undergo differentiation, in morphogenesis control. This chain is GTPase Obg, found in Dehalococcoides mccartyi (strain ATCC BAA-2266 / KCTC 15142 / 195) (Dehalococcoides ethenogenes (strain 195)).